A 355-amino-acid polypeptide reads, in one-letter code: 3-dehydroquinate synthase (355 aa).

NAD(+)-binding positions include 71 to 76, 105 to 109, 129 to 130, Lys-142, and Lys-151; these read EGEERK, GVVGD, and TS. Residues Glu-184, His-246, and His-263 each contribute to the Zn(2+) site.

This sequence belongs to the sugar phosphate cyclases superfamily. Dehydroquinate synthase family. Co(2+) serves as cofactor. It depends on Zn(2+) as a cofactor. NAD(+) is required as a cofactor.

The protein localises to the cytoplasm. The enzyme catalyses 7-phospho-2-dehydro-3-deoxy-D-arabino-heptonate = 3-dehydroquinate + phosphate. The protein operates within metabolic intermediate biosynthesis; chorismate biosynthesis; chorismate from D-erythrose 4-phosphate and phosphoenolpyruvate: step 2/7. Its function is as follows. Catalyzes the conversion of 3-deoxy-D-arabino-heptulosonate 7-phosphate (DAHP) to dehydroquinate (DHQ). The protein is 3-dehydroquinate synthase of Streptococcus pneumoniae (strain ATCC 700669 / Spain 23F-1).